The primary structure comprises 142 residues: VapC ribonuclease R02377 (142 aa).

The region spanning 3 to 140 is the PINc domain; that stretch reads FVDGSVIVAI…YKGNDFSQTD (138 aa). Aspartate 5 and aspartate 115 together coordinate Mg(2+).

Belongs to the PINc/VapC protein family. It depends on Mg(2+) as a cofactor.

Its function is as follows. Toxic component of a type II toxin-antitoxin (TA) system. An RNase. The chain is VapC ribonuclease R02377 from Rhizobium meliloti (strain 1021) (Ensifer meliloti).